Consider the following 382-residue polypeptide: Guanine nucleotide exchange factor for Rab-3A (382 aa).

Over residues 1–17 (MWSGPPQPDQGLPPPLA) the composition is skewed to pro residues. Positions 1-60 (MWSGPPQPDQGLPPPLAAVPVPWKSTDPCQGHRESPGALVETSAGEEAQGQEGPAAAQLD) are disordered. Positions 45–58 (GEEAQGQEGPAAAQ) are enriched in low complexity. The stretch at 73–161 (EKGSEFLKEE…AEVTALKTLV (89 aa)) forms a coiled coil. The tract at residues 166–198 (PASPNRELHPQLLSPTKAGPRKGHSRHKSTSST) is disordered. Phosphoserine occurs at positions 168 and 179. Residues 184–194 (GPRKGHSRHKS) show a composition bias toward basic residues.

This sequence belongs to the SEC2 family. Interacts with RAB3A and IHPK1 through the coiled-coil domain. This interaction is competitive. IHPK1 kinase activity is not required for this interaction.

Its function is as follows. Guanine nucleotide exchange factor (GEF) which may activate RAB3A, a GTPase that regulates synaptic vesicle exocytosis. Promotes the exchange of GDP to GTP, converting inactive GDP-bound Rab proteins into their active GTP-bound form. May also activate RAB8A and RAB8B. This is Guanine nucleotide exchange factor for Rab-3A (RAB3IL1) from Homo sapiens (Human).